We begin with the raw amino-acid sequence, 500 residues long: NAD(P)H-quinone oxidoreductase chain 4, chloroplastic (500 aa).

Helical transmembrane passes span 4–24 (FPWLTIIVFLPISAGSLLFFL), 31–51 (LIKWYTICICILELLLTTYAF), 87–107 (IGPILLTGFITTLATLAAWPV), 113–130 (LFHFLMLAMYSGQIGSFS), 134–154 (LLLFFIMWEFELIPVYLLLSM), 167–187 (FILYTAGGSVFLLIGVLGLGL), 208–228 (ALEIIFYIGFLIAFAVKSPII), 242–262 (HYSTCMLLAGILLKMGAYGLV), 272–292 (AHSIFSPWLIIVGTMQIIYAA), 305–325 (IAYSSVSHMGFIIIGIGSITD), 330–350 (GAILQIISHGFIGAALFFLAG), 386–406 (LALPGMSGFVAELIVFFGIIT), 416–436 (ILITFVMAIGMILTPIYSLSM), and 462–482 (LFVSISIFLPVIGIGIYPDFV).

Belongs to the complex I subunit 4 family.

Its subcellular location is the plastid. It is found in the chloroplast thylakoid membrane. The catalysed reaction is a plastoquinone + NADH + (n+1) H(+)(in) = a plastoquinol + NAD(+) + n H(+)(out). It carries out the reaction a plastoquinone + NADPH + (n+1) H(+)(in) = a plastoquinol + NADP(+) + n H(+)(out). This is NAD(P)H-quinone oxidoreductase chain 4, chloroplastic from Gossypium barbadense (Sea Island cotton).